The chain runs to 366 residues: 3-dehydroquinate synthase (366 aa).

NAD(+)-binding positions include 71–76, 105–109, 129–130, K142, K151, and 169–172; these read DGEQYK, GVIGD, TT, and CLKT. 3 residues coordinate Zn(2+): E184, H247, and H264.

Belongs to the sugar phosphate cyclases superfamily. Dehydroquinate synthase family. The cofactor is Co(2+). Zn(2+) is required as a cofactor. NAD(+) serves as cofactor.

The protein localises to the cytoplasm. It catalyses the reaction 7-phospho-2-dehydro-3-deoxy-D-arabino-heptonate = 3-dehydroquinate + phosphate. Its pathway is metabolic intermediate biosynthesis; chorismate biosynthesis; chorismate from D-erythrose 4-phosphate and phosphoenolpyruvate: step 2/7. In terms of biological role, catalyzes the conversion of 3-deoxy-D-arabino-heptulosonate 7-phosphate (DAHP) to dehydroquinate (DHQ). In Serratia proteamaculans (strain 568), this protein is 3-dehydroquinate synthase.